A 218-amino-acid polypeptide reads, in one-letter code: Uracil-DNA glycosylase (218 aa).

Catalysis depends on Asp-68, which acts as the Proton acceptor.

It belongs to the uracil-DNA glycosylase (UDG) superfamily. UNG family. In terms of assembly, homodimer. Interacts with protein OPG148. Component of the Uracil-DNA glycosylase(UDG)-OPG148-polymerase complex; OPG148 and UDG form a heterodimeric processivity factor that associates with OPG71 to form the processive polymerase holoenzyme.

It carries out the reaction Hydrolyzes single-stranded DNA or mismatched double-stranded DNA and polynucleotides, releasing free uracil.. Functionally, plays an essential role in viral replication as a component of the DNA polymerase processivity factor. Excises uracil residues from the DNA which can arise as a result of misincorporation of dUMP residues by DNA polymerase or due to deamination of cytosine. In Homo sapiens (Human), this protein is Uracil-DNA glycosylase (OPG116).